Consider the following 158-residue polypeptide: Transcriptional repressor NrdR (158 aa).

A zinc finger lies at 3-34; sequence CPFCSFPESRVLDSRPADEGNSIRRRRECGEC. Positions 49–139 constitute an ATP-cone domain; that stretch reads LVVVKKDGRR…VYRQFGDIYS (91 aa).

The protein belongs to the NrdR family. Requires Zn(2+) as cofactor.

In terms of biological role, negatively regulates transcription of bacterial ribonucleotide reductase nrd genes and operons by binding to NrdR-boxes. The sequence is that of Transcriptional repressor NrdR from Desulforamulus reducens (strain ATCC BAA-1160 / DSM 100696 / MI-1) (Desulfotomaculum reducens).